Here is a 1122-residue protein sequence, read N- to C-terminus: AP-4 complex subunit epsilon-1 (1122 aa).

At serine 699 the chain carries Phosphoserine. 2 stretches are compositionally biased toward basic and acidic residues: residues 714–728 (YLPK…KPEA) and 745–760 (TTRK…STEE). Disordered regions lie at residues 714-760 (YLPK…STEE) and 797-861 (SKLK…AEKL). An interaction with TEPSIN region spans residues 726–1122 (PEASHVPAEG…CHCQKVMQTS (397 aa)). The segment covering 841-853 (ELSSELFRSESLS) has biased composition (low complexity). A Phosphoserine modification is found at serine 851.

It belongs to the adaptor complexes large subunit family. Adaptor protein complex 4 (AP-4) is a heterotetramer composed of two large adaptins (epsilon-type subunit AP4E1 and beta-type subunit AP4B1), a medium adaptin (mu-type subunit AP4M1) and a small adaptin (sigma-type AP4S1). Interacts with TEPSIN. Interacts with GRIA2; probably indirect it mediates the somatodendritic localization of GRIA2 in neurons.

The protein localises to the golgi apparatus. The protein resides in the trans-Golgi network membrane. Component of the adaptor protein complex 4 (AP-4). Adaptor protein complexes are vesicle coat components involved both in vesicle formation and cargo selection. They control the vesicular transport of proteins in different trafficking pathways. AP-4 forms a non clathrin-associated coat on vesicles departing the trans-Golgi network (TGN) and may be involved in the targeting of proteins from the trans-Golgi network (TGN) to the endosomal-lysosomal system. It is also involved in protein sorting to the basolateral membrane in epithelial cells and the proper asymmetric localization of somatodendritic proteins in neurons. AP-4 is involved in the recognition and binding of tyrosine-based sorting signals found in the cytoplasmic part of cargos, but may also recognize other types of sorting signal. In Mus musculus (Mouse), this protein is AP-4 complex subunit epsilon-1.